A 583-amino-acid polypeptide reads, in one-letter code: RuBisCO large subunit-binding protein subunit alpha, chloroplastic (583 aa).

The segment covering Met-1–Cys-14 has biased composition (polar residues). The tract at residues Met-1 to Arg-35 is disordered. A chloroplast-targeting transit peptide spans Met-1–Ala-45. Over residues Ser-15 to Arg-31 the composition is skewed to low complexity. Ser-89 is modified (phosphoserine).

It belongs to the chaperonin (HSP60) family. Oligomer of probably six alpha and six beta subunits.

It is found in the plastid. The protein resides in the chloroplast. Its function is as follows. This protein binds RuBisCO small and large subunits and is implicated in the assembly of the enzyme oligomer. This is RuBisCO large subunit-binding protein subunit alpha, chloroplastic from Brassica napus (Rape).